Here is a 354-residue protein sequence, read N- to C-terminus: Probable protein phosphatase 2C 69 (354 aa).

Residues 33–279 (SYGYASSAGK…DNITCVVVRF (247 aa)) enclose the PPM-type phosphatase domain. Residues Asp-69, Gly-70, Asp-231, and Asp-270 each coordinate Mn(2+). The interval 289 to 354 (HISSSSSKEA…LERNSVTDKV (66 aa)) is disordered. Polar residues-rich tracts occupy residues 309 to 328 (ISSN…PENV) and 336 to 348 (ASRS…LERN).

This sequence belongs to the PP2C family. The cofactor is Mg(2+). Requires Mn(2+) as cofactor.

It carries out the reaction O-phospho-L-seryl-[protein] + H2O = L-seryl-[protein] + phosphate. It catalyses the reaction O-phospho-L-threonyl-[protein] + H2O = L-threonyl-[protein] + phosphate. In Arabidopsis thaliana (Mouse-ear cress), this protein is Probable protein phosphatase 2C 69.